We begin with the raw amino-acid sequence, 231 residues long: 5'-methylthioadenosine/S-adenosylhomocysteine nucleosidase (231 aa).

Glu12 functions as the Proton acceptor in the catalytic mechanism. Residues Gly78, Val153, and 174–175 (ME) contribute to the substrate site. The active-site Proton donor is the Asp198.

The protein belongs to the PNP/UDP phosphorylase family. MtnN subfamily.

It carries out the reaction S-adenosyl-L-homocysteine + H2O = S-(5-deoxy-D-ribos-5-yl)-L-homocysteine + adenine. It catalyses the reaction S-methyl-5'-thioadenosine + H2O = 5-(methylsulfanyl)-D-ribose + adenine. The enzyme catalyses 5'-deoxyadenosine + H2O = 5-deoxy-D-ribose + adenine. It participates in amino-acid biosynthesis; L-methionine biosynthesis via salvage pathway; S-methyl-5-thio-alpha-D-ribose 1-phosphate from S-methyl-5'-thioadenosine (hydrolase route): step 1/2. Catalyzes the irreversible cleavage of the glycosidic bond in both 5'-methylthioadenosine (MTA) and S-adenosylhomocysteine (SAH/AdoHcy) to adenine and the corresponding thioribose, 5'-methylthioribose and S-ribosylhomocysteine, respectively. Also cleaves 5'-deoxyadenosine, a toxic by-product of radical S-adenosylmethionine (SAM) enzymes, into 5-deoxyribose and adenine. This chain is 5'-methylthioadenosine/S-adenosylhomocysteine nucleosidase, found in Aliivibrio salmonicida (strain LFI1238) (Vibrio salmonicida (strain LFI1238)).